We begin with the raw amino-acid sequence, 154 residues long: MRIIEGKLRLDGSEKVAIIASRFNHIITDRLVEGAKDAFLRHGGNEENLDLVLVPGAFELPFALDKALSAQKYNGVCCLGAIIRGSTPHFDYVAAEATKGIANTTLKYQKPVTFGVLTTDTIEQAIERAGSKAGNKGFEAMTGLIELIDLYKGL.

5-amino-6-(D-ribitylamino)uracil-binding positions include F23, 57-59 (AFE), and 81-83 (AII). Position 86 to 87 (86 to 87 (ST)) interacts with (2S)-2-hydroxy-3-oxobutyl phosphate. Residue H89 is the Proton donor of the active site. Residue F114 coordinates 5-amino-6-(D-ribitylamino)uracil. R128 lines the (2S)-2-hydroxy-3-oxobutyl phosphate pocket.

It belongs to the DMRL synthase family.

The enzyme catalyses (2S)-2-hydroxy-3-oxobutyl phosphate + 5-amino-6-(D-ribitylamino)uracil = 6,7-dimethyl-8-(1-D-ribityl)lumazine + phosphate + 2 H2O + H(+). The protein operates within cofactor biosynthesis; riboflavin biosynthesis; riboflavin from 2-hydroxy-3-oxobutyl phosphate and 5-amino-6-(D-ribitylamino)uracil: step 1/2. In terms of biological role, catalyzes the formation of 6,7-dimethyl-8-ribityllumazine by condensation of 5-amino-6-(D-ribitylamino)uracil with 3,4-dihydroxy-2-butanone 4-phosphate. This is the penultimate step in the biosynthesis of riboflavin. The chain is 6,7-dimethyl-8-ribityllumazine synthase from Nitratiruptor sp. (strain SB155-2).